Reading from the N-terminus, the 350-residue chain is Alcohol dehydrogenase 1 (350 aa).

Zn(2+) contacts are provided by Cys-46, His-69, Cys-100, Cys-103, Cys-106, Cys-114, and Cys-156. NAD(+) contacts are provided by residues 180 to 186 (GAGGGLG), Asp-204, Lys-209, 271 to 273 (VGL), and Arg-343.

It belongs to the zinc-containing alcohol dehydrogenase family. As to quaternary structure, homotetramer. Zn(2+) serves as cofactor.

The protein resides in the cytoplasm. It catalyses the reaction a primary alcohol + NAD(+) = an aldehyde + NADH + H(+). The catalysed reaction is a secondary alcohol + NAD(+) = a ketone + NADH + H(+). This chain is Alcohol dehydrogenase 1 (ADH1), found in Candida albicans (Yeast).